The primary structure comprises 378 residues: Beta sliding clamp (378 aa).

Belongs to the beta sliding clamp family. Forms a ring-shaped head-to-tail homodimer around DNA which binds and tethers DNA polymerases and other proteins to the DNA. The DNA replisome complex has a single clamp-loading complex (3 tau and 1 each of delta, delta', psi and chi subunits) which binds 3 Pol III cores (1 core on the leading strand and 2 on the lagging strand) each with a beta sliding clamp dimer. Additional proteins in the replisome are other copies of gamma, psi and chi, Ssb, DNA helicase and RNA primase.

It is found in the cytoplasm. Its function is as follows. Confers DNA tethering and processivity to DNA polymerases and other proteins. Acts as a clamp, forming a ring around DNA (a reaction catalyzed by the clamp-loading complex) which diffuses in an ATP-independent manner freely and bidirectionally along dsDNA. Initially characterized for its ability to contact the catalytic subunit of DNA polymerase III (Pol III), a complex, multichain enzyme responsible for most of the replicative synthesis in bacteria; Pol III exhibits 3'-5' exonuclease proofreading activity. The beta chain is required for initiation of replication as well as for processivity of DNA replication. The protein is Beta sliding clamp (dnaN) of Streptococcus pneumoniae serotype 4 (strain ATCC BAA-334 / TIGR4).